Consider the following 553-residue polypeptide: Methyl-coenzyme M reductase II subunit alpha (553 aa).

Q150 serves as a coordination point for coenzyme F430. Coenzyme B-binding positions include R228, 259 to 260 (KH), and R273. Position 260 is a pros-methylhistidine (H260). R274 carries the 5-methylarginine modification. Y335 contacts coenzyme M. The residue at position 402 (Q402) is a 2-methylglutamine. Y446 contributes to the coenzyme M binding site. A 1-thioglycine modification is found at G447. D452 is modified ((Z)-2,3-didehydroaspartate). C454 bears the S-methylcysteine mark.

This sequence belongs to the methyl-coenzyme M reductase alpha subunit family. In terms of assembly, MCR is a hexamer of two alpha, two beta, and two gamma chains, forming a dimer of heterotrimers. The cofactor is coenzyme F430. The alpha subunit contains six modified amino acids near the active site region. Is methylated on His-260, Arg-274, Gln-402 and Cys-454, probably by the action of specific S-adenosylmethionine-dependent methyltransferases. Also contains a thioglycine at position 447, forming a thiopeptide bond. Contains a didehydroaspartate residue at position 452. The methylation on C5 of Arg-274 is a post-translational methylation not essential in vivo, but which plays a role for the stability and structural integrity of MCR.

It carries out the reaction coenzyme B + methyl-coenzyme M = methane + coenzyme M-coenzyme B heterodisulfide. It participates in one-carbon metabolism; methyl-coenzyme M reduction; methane from methyl-coenzyme M: step 1/1. In terms of biological role, component of the methyl-coenzyme M reductase (MCR) I that catalyzes the reductive cleavage of methyl-coenzyme M (CoM-S-CH3 or 2-(methylthio)ethanesulfonate) using coenzyme B (CoB or 7-mercaptoheptanoylthreonine phosphate) as reductant which results in the production of methane and the mixed heterodisulfide of CoB and CoM (CoM-S-S-CoB). This is the final step in methanogenesis. This is Methyl-coenzyme M reductase II subunit alpha (mrtA) from Methanothermobacter marburgensis (strain ATCC BAA-927 / DSM 2133 / JCM 14651 / NBRC 100331 / OCM 82 / Marburg) (Methanobacterium thermoautotrophicum).